Consider the following 524-residue polypeptide: Zinc finger CCCH domain-containing protein 37 (524 aa).

Residues 19–39 are disordered; sequence ASTVSPAPPPPQQPLPPKTGL. Pro residues predominate over residues 24-35; sequence PAPPPPQQPLPP. 3 consecutive C3H1-type zinc fingers follow at residues 174–202, 225–253, and 268–296; these read RAGEKDCTHYMQTRTCKFGESCRFDHPIW, RPGEPDCPYYIKTQRCKYGSKCKFNHPRE, and RPSEPMCTFYMKTGKCKFGLSCKFHHPKD. The disordered stretch occupies residues 300–319; sequence PSSSQDIGSSVGLTSEPDAT. 3 C3H1-type zinc fingers span residues 340 to 368, 420 to 448, and 473 to 501; these read RSGEVDCPFYLKTGSCKYGATCRYNHPER, RPGQSECDYYMKTGECKFGERCKFHHPAD, and REGALNCPYYMKTGTCKYGATCKFDHPPP. Residues 505 to 524 form a disordered region; the sequence is MAKTTSEADAAGATNTDTTQ. Residues 512–524 are compositionally biased toward low complexity; sequence ADAAGATNTDTTQ.

As to quaternary structure, interacts with HEN4. Interacts with FLK and PEP. Highly expressed in inflorescences, at intermediate levels in leaves and stems and at lower levels in roots.

It localises to the nucleus speckle. Involved in flower development. Functions in floral reproductive organ identity by binding AGAMOUS (AG) pre-mRNA and promoting its processing. Functions in association with HUA2 and HEN4. This chain is Zinc finger CCCH domain-containing protein 37 (HUA1), found in Arabidopsis thaliana (Mouse-ear cress).